We begin with the raw amino-acid sequence, 111 residues long: Large ribosomal subunit protein uL23 (111 aa).

The protein belongs to the universal ribosomal protein uL23 family. In terms of assembly, part of the 50S ribosomal subunit. Contacts protein L29, and trigger factor when it is bound to the ribosome.

Its function is as follows. One of the early assembly proteins it binds 23S rRNA. One of the proteins that surrounds the polypeptide exit tunnel on the outside of the ribosome. Forms the main docking site for trigger factor binding to the ribosome. This chain is Large ribosomal subunit protein uL23, found in Nitrosomonas europaea (strain ATCC 19718 / CIP 103999 / KCTC 2705 / NBRC 14298).